Reading from the N-terminus, the 217-residue chain is Probable transaldolase (217 aa).

The active-site Schiff-base intermediate with substrate is lysine 83.

It belongs to the transaldolase family. Type 3B subfamily.

The protein resides in the cytoplasm. The enzyme catalyses D-sedoheptulose 7-phosphate + D-glyceraldehyde 3-phosphate = D-erythrose 4-phosphate + beta-D-fructose 6-phosphate. The protein operates within carbohydrate degradation; pentose phosphate pathway; D-glyceraldehyde 3-phosphate and beta-D-fructose 6-phosphate from D-ribose 5-phosphate and D-xylulose 5-phosphate (non-oxidative stage): step 2/3. Its function is as follows. Transaldolase is important for the balance of metabolites in the pentose-phosphate pathway. This Coprothermobacter proteolyticus (strain ATCC 35245 / DSM 5265 / OCM 4 / BT) protein is Probable transaldolase.